The chain runs to 211 residues: Uracil phosphoribosyltransferase (211 aa).

5-phospho-alpha-D-ribose 1-diphosphate is bound by residues Arg-79, Arg-104, and 131–139; that span reads DPMLATGGS. Uracil-binding positions include Ile-196 and 201–203; that span reads GDA. A 5-phospho-alpha-D-ribose 1-diphosphate-binding site is contributed by Asp-202.

Belongs to the UPRTase family. It depends on Mg(2+) as a cofactor.

It carries out the reaction UMP + diphosphate = 5-phospho-alpha-D-ribose 1-diphosphate + uracil. It participates in pyrimidine metabolism; UMP biosynthesis via salvage pathway; UMP from uracil: step 1/1. Allosterically activated by GTP. Catalyzes the conversion of uracil and 5-phospho-alpha-D-ribose 1-diphosphate (PRPP) to UMP and diphosphate. The protein is Uracil phosphoribosyltransferase of Lactococcus lactis subsp. cremoris (strain SK11).